Reading from the N-terminus, the 291-residue chain is Methionine aminopeptidase (291 aa).

Residue His118 coordinates substrate. Asp135, Asp146, and His209 together coordinate a divalent metal cation. His216 is a binding site for substrate. A divalent metal cation-binding residues include Glu241 and Glu273.

This sequence belongs to the peptidase M24A family. Methionine aminopeptidase type 1 subfamily. As to quaternary structure, monomer. Co(2+) serves as cofactor. Zn(2+) is required as a cofactor. The cofactor is Mn(2+). Requires Fe(2+) as cofactor.

The enzyme catalyses Release of N-terminal amino acids, preferentially methionine, from peptides and arylamides.. Functionally, removes the N-terminal methionine from nascent proteins. The N-terminal methionine is often cleaved when the second residue in the primary sequence is small and uncharged (Met-Ala-, Cys, Gly, Pro, Ser, Thr, or Val). Requires deformylation of the N(alpha)-formylated initiator methionine before it can be hydrolyzed. The chain is Methionine aminopeptidase from Chlamydia trachomatis serovar D (strain ATCC VR-885 / DSM 19411 / UW-3/Cx).